The sequence spans 322 residues: Fructose-1,6-bisphosphatase class 1 3 (322 aa).

Residues Glu84, Asp103, Leu105, and Asp106 each contribute to the Mg(2+) site. Residues 106-109, Asn198, and Lys262 each bind substrate; that span reads DGSS. Residue Glu268 coordinates Mg(2+).

This sequence belongs to the FBPase class 1 family. Homotetramer. Requires Mg(2+) as cofactor.

The protein localises to the cytoplasm. The enzyme catalyses beta-D-fructose 1,6-bisphosphate + H2O = beta-D-fructose 6-phosphate + phosphate. The protein operates within carbohydrate biosynthesis; gluconeogenesis. This is Fructose-1,6-bisphosphatase class 1 3 from Pseudoalteromonas translucida (strain TAC 125).